Reading from the N-terminus, the 392-residue chain is Outer membrane protein assembly factor BamB (392 aa).

Residues 1–19 form the signal peptide; the sequence is MQLRKLLLPGLLSVTLLSG. Residue Cys-20 is the site of N-palmitoyl cysteine attachment. Cys-20 is lipidated: S-diacylglycerol cysteine.

It belongs to the BamB family. In terms of assembly, part of the Bam complex, which is composed of the outer membrane protein BamA, and four lipoproteins BamB, BamC, BamD and BamE.

The protein resides in the cell outer membrane. In terms of biological role, part of the outer membrane protein assembly complex, which is involved in assembly and insertion of beta-barrel proteins into the outer membrane. In Shigella dysenteriae serotype 1 (strain Sd197), this protein is Outer membrane protein assembly factor BamB.